The sequence spans 240 residues: Ubiquinone biosynthesis O-methyltransferase (240 aa).

S-adenosyl-L-methionine-binding residues include Arg44, Gly64, Asp85, and Met129.

It belongs to the methyltransferase superfamily. UbiG/COQ3 family.

The enzyme catalyses a 3-demethylubiquinol + S-adenosyl-L-methionine = a ubiquinol + S-adenosyl-L-homocysteine + H(+). It catalyses the reaction a 3-(all-trans-polyprenyl)benzene-1,2-diol + S-adenosyl-L-methionine = a 2-methoxy-6-(all-trans-polyprenyl)phenol + S-adenosyl-L-homocysteine + H(+). The protein operates within cofactor biosynthesis; ubiquinone biosynthesis. O-methyltransferase that catalyzes the 2 O-methylation steps in the ubiquinone biosynthetic pathway. The chain is Ubiquinone biosynthesis O-methyltransferase from Escherichia coli O9:H4 (strain HS).